Consider the following 99-residue polypeptide: NADH-quinone oxidoreductase subunit K (99 aa).

3 consecutive transmembrane segments (helical) span residues 3–23 (PDNYLYLSALLFTIGAAGVLL), 28–48 (IVVFMCVELMLNAANLAFVAF), and 59–79 (VVAFFTMVVAACEVVIGLAII).

Belongs to the complex I subunit 4L family. NDH-1 is composed of 14 different subunits. Subunits NuoA, H, J, K, L, M, N constitute the membrane sector of the complex.

The protein localises to the cell membrane. It catalyses the reaction a quinone + NADH + 5 H(+)(in) = a quinol + NAD(+) + 4 H(+)(out). Its function is as follows. NDH-1 shuttles electrons from NADH, via FMN and iron-sulfur (Fe-S) centers, to quinones in the respiratory chain. The immediate electron acceptor for the enzyme in this species is believed to be a menaquinone. Couples the redox reaction to proton translocation (for every two electrons transferred, four hydrogen ions are translocated across the cytoplasmic membrane), and thus conserves the redox energy in a proton gradient. The protein is NADH-quinone oxidoreductase subunit K of Mycobacterium sp. (strain JLS).